The primary structure comprises 707 residues: UvrABC system protein C (707 aa).

Positions Ala14–Val94 constitute a GIY-YIG domain. Residues Gly206–Ser241 form the UVR domain. Positions Pro654–Ala684 are disordered. Over residues Pro658–Ala684 the composition is skewed to low complexity.

This sequence belongs to the UvrC family. As to quaternary structure, interacts with UvrB in an incision complex.

The protein localises to the cytoplasm. Its function is as follows. The UvrABC repair system catalyzes the recognition and processing of DNA lesions. UvrC both incises the 5' and 3' sides of the lesion. The N-terminal half is responsible for the 3' incision and the C-terminal half is responsible for the 5' incision. The protein is UvrABC system protein C of Anaeromyxobacter dehalogenans (strain 2CP-C).